The chain runs to 405 residues: Aspartokinase (405 aa).

7 to 10 (KYGG) contributes to the ATP binding site. A substrate-binding site is contributed by 25 to 30 (RIAHYR). Ser-41 contributes to the ATP binding site. Residues 47–49 (TDE), Glu-74, 125–126 (LD), 150–153 (RGGS), and Ser-153 each bind substrate. ATP contacts are provided by residues 173-174 (TD), 179-184 (YTTDPH), and Arg-209. 2 ACT domains span residues 263 to 342 (IGLI…IAKV) and 344 to 405 (IVGV…LDKA). Substrate is bound by residues Asp-270, 274-275 (IA), 288-290 (AVD), Gln-294, 355-356 (VP), 369-370 (NI), and 376-377 (SE).

It belongs to the aspartokinase family. Heterotetramer consisting of 2 isoforms Alpha (catalytic and regulation) and of a homodimer of 2 isoforms Beta (regulation and thermostability).

The enzyme catalyses L-aspartate + ATP = 4-phospho-L-aspartate + ADP. Its pathway is amino-acid biosynthesis; L-lysine biosynthesis via DAP pathway; (S)-tetrahydrodipicolinate from L-aspartate: step 1/4. The protein operates within amino-acid biosynthesis; L-methionine biosynthesis via de novo pathway; L-homoserine from L-aspartate: step 1/3. It functions in the pathway amino-acid biosynthesis; L-threonine biosynthesis; L-threonine from L-aspartate: step 1/5. Its activity is regulated as follows. Inhibited by threonine. Catalyzes the phosphorylation of the beta-carboxyl group of aspartic acid with ATP to yield 4-phospho-L-aspartate, which is involved in the branched biosynthetic pathway leading to the biosynthesis of amino acids threonine, isoleucine and methionine. In Thermus thermophilus, this protein is Aspartokinase (ask).